The chain runs to 371 residues: MGRSLIFSGNMSLRISHLPRSSLPLQNPISGRTVNRTFRYRCTRILSNSFKSTTRLQTKAVLSEVSDQTRYPRIGAKTTGTISPAHLLEVVELAAKTGAEVVMEAVNKPRNITYKGLSDLVTDTDKASEAAILEVVKKNFSDHLILGEEGGIIGDSSSDYLWCIDPLDGTTNFAHGYPSFAVSVGVLYRGNPAAASVVEFVGGPMCWNTRTFSATAGGGALCNGQKIHVSKTDAVERALLITGFGYEHDDAWSTNMELFKEFTDVSRGVRRLGAAAVDMCHVALGIAESYWEYRLKPWDMAAGVLIVEEAGGAVTRMDGGKFSVFDRSVLVSNGVLHPKLLERIAPATENLKSKGIDFSLWFKPEDYHTEL.

A chloroplast-targeting transit peptide spans 1-60 (MGRSLIFSGNMSLRISHLPRSSLPLQNPISGRTVNRTFRYRCTRILSNSFKSTTRLQTKA). N-acetylvaline is present on Val61. 4 residues coordinate Mg(2+): Glu148, Asp165, Leu167, and Asp168. Substrate is bound at residue Glu148. Residues 167–170 (LDGT), 273–275 (GAA), Glu292, and Asp299 contribute to the substrate site. A Mg(2+)-binding site is contributed by Asp299.

It belongs to the inositol monophosphatase superfamily. The cofactor is Mg(2+). As to expression, ubiquitous. Expressed in pistil and seed endosperm.

The protein localises to the plastid. The protein resides in the chloroplast stroma. It catalyses the reaction a myo-inositol phosphate + H2O = myo-inositol + phosphate. The protein operates within polyol metabolism; myo-inositol biosynthesis; myo-inositol from D-glucose 6-phosphate: step 2/2. Its function is as follows. Phosphatase acting preferentially on D-myoinositol 1-phosphate (D-Ins 1-P). The protein is Phosphatase IMPL1, chloroplastic (IMPL1) of Arabidopsis thaliana (Mouse-ear cress).